The sequence spans 377 residues: 23S rRNA (uracil(747)-C(5))-methyltransferase RlmC (377 aa).

Positions 3, 11, 14, and 87 each coordinate [4Fe-4S] cluster. The S-adenosyl-L-methionine site is built by Gln-212, Phe-241, Glu-262, and Asn-307. Cys-334 serves as the catalytic Nucleophile.

It belongs to the class I-like SAM-binding methyltransferase superfamily. RNA M5U methyltransferase family. RlmC subfamily.

The enzyme catalyses uridine(747) in 23S rRNA + S-adenosyl-L-methionine = 5-methyluridine(747) in 23S rRNA + S-adenosyl-L-homocysteine + H(+). In terms of biological role, catalyzes the formation of 5-methyl-uridine at position 747 (m5U747) in 23S rRNA. This Proteus mirabilis (strain HI4320) protein is 23S rRNA (uracil(747)-C(5))-methyltransferase RlmC.